Consider the following 551-residue polypeptide: Formate--tetrahydrofolate ligase (551 aa).

An ATP-binding site is contributed by 65-72; that stretch reads TPAGEGKT.

The protein belongs to the formate--tetrahydrofolate ligase family.

It catalyses the reaction (6S)-5,6,7,8-tetrahydrofolate + formate + ATP = (6R)-10-formyltetrahydrofolate + ADP + phosphate. The protein operates within one-carbon metabolism; tetrahydrofolate interconversion. The polypeptide is Formate--tetrahydrofolate ligase (Thermosipho africanus (strain TCF52B)).